The chain runs to 320 residues: MRQTKTGILLANLGTPDAPTPEAVKRYLKQFLSDRRVVDTSRLLWWPLLRSVILPLRSPRVAKLYASVWMEGGSPLMVYSRQQQQALAQRLPETPVALGMSYGSPSLESAVDELLAEHVDHIVVLPLYPQYSCSTVGAVWDELARILARKRSIPGISFIRDYADNHDYINALANSVRASFAKHGEPDLLLLSYHGIPQRYADEGDDYPQRCRTTTRELASALEMAPEKVMMTFQSRFGREPWLMPYTDETLKMLGEKGVGHIQVMCPGFAADCLETLEEIAEQNREVFLGAGGKKYEYIPALNATPEHIEMMANLVAAYR.

Residues His-194 and Glu-275 each contribute to the Fe cation site.

This sequence belongs to the ferrochelatase family. In terms of assembly, monomer.

The protein localises to the cytoplasm. The enzyme catalyses heme b + 2 H(+) = protoporphyrin IX + Fe(2+). Its pathway is porphyrin-containing compound metabolism; protoheme biosynthesis; protoheme from protoporphyrin-IX: step 1/1. Catalyzes the ferrous insertion into protoporphyrin IX. The chain is Ferrochelatase from Escherichia coli O45:K1 (strain S88 / ExPEC).